The sequence spans 242 residues: 7-cyano-7-deazaguanine synthase (242 aa).

14-24 is an ATP binding site; it reads FSGGQDSATCL. 4 residues coordinate Zn(2+): cysteine 202, cysteine 217, cysteine 220, and cysteine 223.

Belongs to the QueC family. Zn(2+) serves as cofactor.

The enzyme catalyses 7-carboxy-7-deazaguanine + NH4(+) + ATP = 7-cyano-7-deazaguanine + ADP + phosphate + H2O + H(+). It functions in the pathway purine metabolism; 7-cyano-7-deazaguanine biosynthesis. Its function is as follows. Catalyzes the ATP-dependent conversion of 7-carboxy-7-deazaguanine (CDG) to 7-cyano-7-deazaguanine (preQ(0)). The protein is 7-cyano-7-deazaguanine synthase of Rhodopseudomonas palustris (strain BisA53).